Here is a 403-residue protein sequence, read N- to C-terminus: Argininosuccinate synthase (403 aa).

ATP is bound at residue 10 to 18; the sequence is AYSGGLDTS. Residues Tyr88 and Ser93 each contribute to the L-citrulline site. An ATP-binding site is contributed by Gly118. L-aspartate-binding residues include Thr120, Asn124, and Asp125. Asn124 serves as a coordination point for L-citrulline. L-citrulline contacts are provided by Arg128, Ser177, Ser186, Glu263, and Tyr275.

Belongs to the argininosuccinate synthase family. Type 1 subfamily. As to quaternary structure, homotetramer.

It is found in the cytoplasm. It carries out the reaction L-citrulline + L-aspartate + ATP = 2-(N(omega)-L-arginino)succinate + AMP + diphosphate + H(+). The protein operates within amino-acid biosynthesis; L-arginine biosynthesis; L-arginine from L-ornithine and carbamoyl phosphate: step 2/3. This Clostridium perfringens (strain ATCC 13124 / DSM 756 / JCM 1290 / NCIMB 6125 / NCTC 8237 / Type A) protein is Argininosuccinate synthase.